A 361-amino-acid polypeptide reads, in one-letter code: Protein Csal_2339 (361 aa).

Serine 91 serves as the catalytic Proton acceptor. Residues 92–93 and 259–260 each bind substrate; these read GS and GT.

This sequence belongs to the proline racemase family.

The enzyme catalyses trans-4-hydroxy-L-proline = cis-4-hydroxy-D-proline. Its function is as follows. In vitro, catalyzes the epimerization of trans-4-hydroxy-L-proline (t4LHyp) to cis-4-hydroxy-D-proline (c4DHyp), albeit with very low efficiency. The physiological substrate may be different. Displays neither proline racemase activity nor t3LHyp dehydratase activity. This is Protein Csal_2339 from Chromohalobacter salexigens (strain ATCC BAA-138 / DSM 3043 / CIP 106854 / NCIMB 13768 / 1H11).